Consider the following 126-residue polypeptide: Large ribosomal subunit protein bL12 (126 aa).

The protein belongs to the bacterial ribosomal protein bL12 family. As to quaternary structure, homodimer. Part of the ribosomal stalk of the 50S ribosomal subunit. Forms a multimeric L10(L12)X complex, where L10 forms an elongated spine to which 2 to 4 L12 dimers bind in a sequential fashion. Binds GTP-bound translation factors.

Its function is as follows. Forms part of the ribosomal stalk which helps the ribosome interact with GTP-bound translation factors. Is thus essential for accurate translation. The chain is Large ribosomal subunit protein bL12 from Acidobacterium capsulatum (strain ATCC 51196 / DSM 11244 / BCRC 80197 / JCM 7670 / NBRC 15755 / NCIMB 13165 / 161).